An 81-amino-acid chain; its full sequence is Defensin-like protein 130 (81 aa).

A signal peptide spans 1 to 21 (MTKNTSLTIFMVVLVIGMLYT). Disulfide bonds link Cys32–Cys81, Cys41–Cys63, Cys46–Cys75, and Cys50–Cys77.

This sequence belongs to the DEFL family.

It localises to the secreted. This chain is Defensin-like protein 130 (LCR28), found in Arabidopsis thaliana (Mouse-ear cress).